A 145-amino-acid polypeptide reads, in one-letter code: D-aminoacyl-tRNA deacylase (145 aa).

A Gly-cisPro motif, important for rejection of L-amino acids motif is present at residues Gly137–Pro138.

It belongs to the DTD family. In terms of assembly, homodimer.

It localises to the cytoplasm. It catalyses the reaction glycyl-tRNA(Ala) + H2O = tRNA(Ala) + glycine + H(+). The enzyme catalyses a D-aminoacyl-tRNA + H2O = a tRNA + a D-alpha-amino acid + H(+). An aminoacyl-tRNA editing enzyme that deacylates mischarged D-aminoacyl-tRNAs. Also deacylates mischarged glycyl-tRNA(Ala), protecting cells against glycine mischarging by AlaRS. Acts via tRNA-based rather than protein-based catalysis; rejects L-amino acids rather than detecting D-amino acids in the active site. By recycling D-aminoacyl-tRNA to D-amino acids and free tRNA molecules, this enzyme counteracts the toxicity associated with the formation of D-aminoacyl-tRNA entities in vivo and helps enforce protein L-homochirality. The chain is D-aminoacyl-tRNA deacylase from Cereibacter sphaeroides (strain KD131 / KCTC 12085) (Rhodobacter sphaeroides).